The following is a 489-amino-acid chain: Glutamyl-tRNA(Gln) amidotransferase subunit A (489 aa).

Residues Lys77 and Ser157 each act as charge relay system in the active site. The Acyl-ester intermediate role is filled by Ser181.

The protein belongs to the amidase family. GatA subfamily. In terms of assembly, heterotrimer of A, B and C subunits.

It carries out the reaction L-glutamyl-tRNA(Gln) + L-glutamine + ATP + H2O = L-glutaminyl-tRNA(Gln) + L-glutamate + ADP + phosphate + H(+). Allows the formation of correctly charged Gln-tRNA(Gln) through the transamidation of misacylated Glu-tRNA(Gln) in organisms which lack glutaminyl-tRNA synthetase. The reaction takes place in the presence of glutamine and ATP through an activated gamma-phospho-Glu-tRNA(Gln). The polypeptide is Glutamyl-tRNA(Gln) amidotransferase subunit A (Caulobacter vibrioides (strain ATCC 19089 / CIP 103742 / CB 15) (Caulobacter crescentus)).